A 397-amino-acid polypeptide reads, in one-letter code: MEVEIRLGSVRYPFRLGTDCLGAIVEDLVAMSASRLLIVCDSNTGPLFGAELVERLSPRVPANLLIHRAGEPYKDLQAVGTLADSALQLGADRASVVVAVGGGVIGNIAGLMAALLFRGIRLVHIPTSLIAMSDSVLSLKQAVNACVGKNLMGTFYAPESVLADTAMLRSLPFRETVSGLCEVVKNSLAIRPSMVEMLRTSLRQDAVYDDETMYEIISESILAKASVTVDDMHECRAGLVLEYGHTVGHAIEYTAAGGLSHGQAIGLGMVVAAEVSHRLGHLDQEAVALHRELLTRAGAMVTIPEEVDLDEVMHRLRFDNKRGYLADPAESSAMVLLGGLGEPLWHDGRPLVSVPMALVGEVVNEIARPEIPNFELVAPVETVEEGRVPDTVGAADG.

NAD(+) is bound by residues Asp-41, 71–74 (EPYK), 103–107 (GVIGN), 127–128 (TS), 138–140 (SLK), and 149–150 (KN). Residue Lys-140 is part of the active site. Position 182 (Glu-182) interacts with Co(2+). The active site involves Glu-242. Positions 245 and 261 each coordinate Co(2+).

This sequence belongs to the sugar phosphate cyclases superfamily. DOI synthase family. It depends on NAD(+) as a cofactor. Co(2+) is required as a cofactor.

It catalyses the reaction D-glucose 6-phosphate = 2-deoxy-L-scyllo-inosose + phosphate. The protein operates within metabolic intermediate biosynthesis; 2-deoxystreptamine biosynthesis; 2-deoxystreptamine from D-glucose 6-phosphate: step 1/4. It functions in the pathway antibiotic biosynthesis; gentamicin biosynthesis. Functionally, catalyzes the intramolecular carbocycle formation from D-glucose-6-phosphate to 2-deoxy-scyllo-inosose (DOI). In Micromonospora echinospora (Micromonospora purpurea), this protein is 2-deoxy-scyllo-inosose synthase (gtmA).